A 166-amino-acid polypeptide reads, in one-letter code: Emerin homolog 1 (166 aa).

One can recognise an LEM domain in the interval 1–44; the sequence is MDVSQLTDAELRDSLKSHGVSVGPIVATTRKLYEKKLIKLSDGS. At 1-127 the chain is on the nuclear side; sequence MDVSQLTDAE…QAQSNKGGFL (127 aa). The segment at 62-99 is disordered; that stretch reads IISSSPKKSPPQRVFQNVSAATAAATTSPESDSDDCEE. Residues 128 to 148 traverse the membrane as a helical segment; it reads GSTITFTILFVFIAVFAYFLI. Over 149-166 the chain is Perinuclear space; sequence ENAEQLKLVAETNPEDTI.

As to quaternary structure, interacts with lmn-1 and baf-1. As to expression, ubiquitous. Expressed in all cells, except in cells undergoing spermatogenesis. High expression in hypodermis, neurons, pharyngeal muscle, body wall muscle and gonadal sheath.

It localises to the nucleus inner membrane. Its subcellular location is the nucleus envelope. Nuclear lamina-associated inner nuclear membrane protein that is involved in cell division, nuclear structure organization, maintenance of nuclear envelope integrity and nuclear envelope reformation after mitosis. Involved in chromosome segregation and cell division, probably via its interaction with the nuclear intermediate filament protein lmn-1, the main component of nuclear lamina. Required to organize the distribution of lmn-1, nuclear pore complexes (NPCs) and chromatin in mitotically active cells. Together with lem-2, plays a role in baf-1 enrichment at the nuclear envelope in anaphase. Together with lem-2, involved in muscle cell attachment to hypodermal cells, as well as muscle cell location and sarcomere organization. May play a role in radiation-induced DNA damage repair response. May repress binding of transcription factor pha-4 with target sequences in pharyngeal cells. The chain is Emerin homolog 1 (emr-1) from Caenorhabditis elegans.